Here is a 335-residue protein sequence, read N- to C-terminus: MIIAVDGMGGDFAPELVVEGCIQAVKEYEGIHIIITGKKELIKNELDKREYNGNKIEILNSEEVISTNEAPVKAIRRKKDSSMVKALELVKEGKAQAVISAGSTGALMAGATFVLGRIKGINRVCLAPLLPGAKAPFMIADAGANVDCKAEYLVQFAMMGKVYFESVLGVKSPTVGLVNIGAEEEKGNELTKAAYKLLKDTDFNFIGNIEPRDIPRGEVNIAVCDGFIGNTVLKTYEGVASNLFSMLKKEIMASTRGKIGGALLKPVFKDFKKKFDYTEYGGSPFLGAKGICIKAHGSSDAKAFKNAIRQAKICYDKKIIEEIENNLGNLIENNI.

The protein belongs to the PlsX family. As to quaternary structure, homodimer. Probably interacts with PlsY.

It is found in the cytoplasm. The enzyme catalyses a fatty acyl-[ACP] + phosphate = an acyl phosphate + holo-[ACP]. The protein operates within lipid metabolism; phospholipid metabolism. Catalyzes the reversible formation of acyl-phosphate (acyl-PO(4)) from acyl-[acyl-carrier-protein] (acyl-ACP). This enzyme utilizes acyl-ACP as fatty acyl donor, but not acyl-CoA. This chain is Phosphate acyltransferase, found in Clostridium botulinum (strain Langeland / NCTC 10281 / Type F).